The following is a 669-amino-acid chain: DNA ligase (669 aa).

NAD(+)-binding positions include Asp34–Asp38, Ser83–Leu84, and Glu114. Lys116 (N6-AMP-lysine intermediate) is an active-site residue. Residues Arg137, Glu171, Lys287, and Lys311 each coordinate NAD(+). The Zn(2+) site is built by Cys405, Cys408, Cys423, and Cys428. The 79-residue stretch at Asn591–Lys669 folds into the BRCT domain.

Belongs to the NAD-dependent DNA ligase family. LigA subfamily. Mg(2+) serves as cofactor. Requires Mn(2+) as cofactor.

It carries out the reaction NAD(+) + (deoxyribonucleotide)n-3'-hydroxyl + 5'-phospho-(deoxyribonucleotide)m = (deoxyribonucleotide)n+m + AMP + beta-nicotinamide D-nucleotide.. Functionally, DNA ligase that catalyzes the formation of phosphodiester linkages between 5'-phosphoryl and 3'-hydroxyl groups in double-stranded DNA using NAD as a coenzyme and as the energy source for the reaction. It is essential for DNA replication and repair of damaged DNA. This chain is DNA ligase, found in Bacillus cereus (strain AH187).